We begin with the raw amino-acid sequence, 159 residues long: Ubiquitin-conjugating enzyme E2 variant 1B (159 aa).

The UBC core domain occupies 11 to 159; sequence PRNFRLLEEL…KGLVVKCCVM (149 aa).

The protein belongs to the ubiquitin-conjugating enzyme family. Heterodimer with UBC35 or UBC36. In terms of tissue distribution, expressed in roots, shoots, leaves, stems and flowers, but not in pollen.

Its function is as follows. Has no ubiquitin ligase activity on its own. The heterodimer with UBC catalyzes the synthesis of non-canonical poly-ubiquitin chains that are linked through 'Lys-63'. This type of poly-ubiquitination does not lead to protein degradation by the proteasome. Mediates transcriptional activation of target genes. May play a role in the control of progress through the cell cycle and differentiation. May play a role in the error-free DNA repair pathway and contributes to the survival of cells after DNA damage. This is Ubiquitin-conjugating enzyme E2 variant 1B (UEV1B) from Arabidopsis thaliana (Mouse-ear cress).